We begin with the raw amino-acid sequence, 375 residues long: o-succinylbenzoate synthase (375 aa).

Lys-166 serves as the catalytic Proton donor. Mg(2+)-binding residues include Asp-191, Glu-216, and Asp-241. Lys-265 functions as the Proton acceptor in the catalytic mechanism.

It belongs to the mandelate racemase/muconate lactonizing enzyme family. MenC type 2 subfamily. As to quaternary structure, homotetramer. The cofactor is a divalent metal cation.

The enzyme catalyses (1R,6R)-6-hydroxy-2-succinyl-cyclohexa-2,4-diene-1-carboxylate = 2-succinylbenzoate + H2O. The catalysed reaction is N-acetyl-D-methionine = N-acetyl-L-methionine. It carries out the reaction N-acetyl-D-phenylalanine = N-acetyl-L-phenylalanine. Its pathway is quinol/quinone metabolism; 1,4-dihydroxy-2-naphthoate biosynthesis; 1,4-dihydroxy-2-naphthoate from chorismate: step 4/7. It functions in the pathway quinol/quinone metabolism; menaquinone biosynthesis. In terms of biological role, converts 2-succinyl-6-hydroxy-2,4-cyclohexadiene-1-carboxylate (SHCHC) to 2-succinylbenzoate (OSB). Also acts as a N-succinylamino acid racemase (NSAR) that catalyzes the racemization of various N-succinylamino acids, including N-succinyl-alanine and N-succinyl-phenylalanine. Can catalyze the racemization of a broad range of N-acylamino acids, including N-acetyl-methionine, N-acetyl-phenylalanine, N-carbamoyl-methionine, N-formyl-D-methionine, N-formyl-D-norleucine and N-carbamoyl-D-norleucine. May be a bifunctional enzyme involved in menaquinone biosynthesis and in an irreversible pathway for the conversion of D- to L-amino acids, thereby facilitating the survival and/or growth of the organism. The chain is o-succinylbenzoate synthase from Geobacillus kaustophilus.